Consider the following 262-residue polypeptide: Small ribosomal subunit protein uS3 (262 aa).

Residues 38–106 (LRKIIAKELE…KVKLNIQEIH (69 aa)) enclose the KH type-2 domain. Positions 211-262 (KGQTQLPQPAVAAARPGLTVEEEERPQRKGGRGGRGANAGAARGGRGGRSRS) are disordered. Residues 243-255 (GGRGANAGAARGG) show a composition bias toward gly residues.

The protein belongs to the universal ribosomal protein uS3 family. Part of the 30S ribosomal subunit. Forms a tight complex with proteins S10 and S14.

Binds the lower part of the 30S subunit head. Binds mRNA in the 70S ribosome, positioning it for translation. The polypeptide is Small ribosomal subunit protein uS3 (Roseiflexus sp. (strain RS-1)).